The primary structure comprises 485 residues: Efflux pump bik6 (485 aa).

Transmembrane regions (helical) follow at residues Val-42–Tyr-62, Leu-86–Gly-106, Lys-108–Ala-128, Phe-139–Ile-159, Tyr-172–Ala-192, and Trp-199–Leu-219. Residue Asn-241 is glycosylated (N-linked (GlcNAc...) asparagine). A run of 6 helical transmembrane segments spans residues Met-269–Leu-289, Trp-306–Ala-326, Leu-353–Thr-373, Ser-379–Phe-399, Ala-417–Trp-437, and Trp-447–Phe-467.

The protein belongs to the major facilitator superfamily.

It is found in the membrane. In terms of biological role, efflux pump; part of the gene cluster that mediates the biosynthesis of bikaverin, a red pigment also considered as a mycotoxin. The chain is Efflux pump bik6 from Gibberella fujikuroi (strain CBS 195.34 / IMI 58289 / NRRL A-6831) (Bakanae and foot rot disease fungus).